The sequence spans 246 residues: LexA repressor (246 aa).

The tract at residues 1-34 is disordered; it reads MATPQTGKKTPSRRVSELPDGPPDATGLTPRQQR. A DNA-binding region (H-T-H motif) is located at residues 52-72; the sequence is MREIGEAVGLTSSSSVAHQLK. Catalysis depends on for autocatalytic cleavage activity residues Ser-170 and Lys-207.

The protein belongs to the peptidase S24 family. Homodimer.

It carries out the reaction Hydrolysis of Ala-|-Gly bond in repressor LexA.. In terms of biological role, represses a number of genes involved in the response to DNA damage (SOS response), including recA and lexA. In the presence of single-stranded DNA, RecA interacts with LexA causing an autocatalytic cleavage which disrupts the DNA-binding part of LexA, leading to derepression of the SOS regulon and eventually DNA repair. This is LexA repressor from Nocardioides sp. (strain ATCC BAA-499 / JS614).